The chain runs to 259 residues: MAACRALKAVLVDLSGTLHIEDAAVPGAQEALKRLRGASVIIRFVTNTTKESKQDLLERLRKLEFDISEDEIFTSLTAARSLLERKQVRPMLLVDDRALPDFKGIQTSDPNAVVMGLAPEHFHYQILNQAFRLLLDGAPLIAIHKARYYKRKDGLALGPGPFVTALEYATDTKATVVGKPEKTFFLEALRGTGCEPEEAVMIGDDCRDDVGGAQDVGMLGILVKTGKYRASDEEKINPPPYLTCESFPHAVDHILQHLL.

Positions 13 and 15 each coordinate Mg(2+). Substrate is bound by residues 13–15 (DLS) and 46–47 (TN). The stretch at 47-71 (NTTKESKQDLLERLRKLEFDISEDE) forms a coiled coil. An N6-succinyllysine modification is found at lysine 50. Position 179 (lysine 179) interacts with substrate. Mg(2+) is bound at residue aspartate 204.

This sequence belongs to the HAD-like hydrolase superfamily. The cofactor is Mg(2+).

The protein is Haloacid dehalogenase-like hydrolase domain-containing protein 2 (HDHD2) of Homo sapiens (Human).